A 147-amino-acid polypeptide reads, in one-letter code: Orcokinin peptides (147 aa).

An N-terminal signal peptide occupies residues 1–27 (MPRHSVFALSILALSITATVWIPTVQA). Propeptides lie at residues 28-89 (ETNL…ERFG) and 146-147 (FG).

It belongs to the orcokinin family.

Its subcellular location is the secreted. Myotropic peptides. This is Orcokinin peptides from Apis mellifera (Honeybee).